A 301-amino-acid chain; its full sequence is ATP synthase gamma chain (301 aa).

Belongs to the ATPase gamma chain family. In terms of assembly, F-type ATPases have 2 components, CF(1) - the catalytic core - and CF(0) - the membrane proton channel. CF(1) has five subunits: alpha(3), beta(3), gamma(1), delta(1), epsilon(1). CF(0) has three main subunits: a, b and c.

Its subcellular location is the cell inner membrane. In terms of biological role, produces ATP from ADP in the presence of a proton gradient across the membrane. The gamma chain is believed to be important in regulating ATPase activity and the flow of protons through the CF(0) complex. This is ATP synthase gamma chain from Helicobacter acinonychis (strain Sheeba).